The primary structure comprises 163 residues: Large ribosomal subunit protein uL10 (163 aa).

It belongs to the universal ribosomal protein uL10 family. In terms of assembly, part of the ribosomal stalk of the 50S ribosomal subunit. The N-terminus interacts with L11 and the large rRNA to form the base of the stalk. The C-terminus forms an elongated spine to which L12 dimers bind in a sequential fashion forming a multimeric L10(L12)X complex.

Forms part of the ribosomal stalk, playing a central role in the interaction of the ribosome with GTP-bound translation factors. This is Large ribosomal subunit protein uL10 from Haemophilus influenzae (strain PittGG).